The following is a 180-amino-acid chain: Large ribosomal subunit protein uL5 (180 aa).

Belongs to the universal ribosomal protein uL5 family. As to quaternary structure, part of the 50S ribosomal subunit; part of the 5S rRNA/L5/L18/L25 subcomplex. Contacts the 5S rRNA and the P site tRNA. Forms a bridge to the 30S subunit in the 70S ribosome.

This is one of the proteins that bind and probably mediate the attachment of the 5S RNA into the large ribosomal subunit, where it forms part of the central protuberance. In the 70S ribosome it contacts protein S13 of the 30S subunit (bridge B1b), connecting the 2 subunits; this bridge is implicated in subunit movement. Contacts the P site tRNA; the 5S rRNA and some of its associated proteins might help stabilize positioning of ribosome-bound tRNAs. The polypeptide is Large ribosomal subunit protein uL5 (Ruminiclostridium cellulolyticum (strain ATCC 35319 / DSM 5812 / JCM 6584 / H10) (Clostridium cellulolyticum)).